The chain runs to 78 residues: Small ribosomal subunit protein bS20 (78 aa).

The protein belongs to the bacterial ribosomal protein bS20 family.

Binds directly to 16S ribosomal RNA. In Streptococcus pneumoniae serotype 4 (strain ATCC BAA-334 / TIGR4), this protein is Small ribosomal subunit protein bS20.